A 383-amino-acid chain; its full sequence is 4-hydroxy-3-methylbut-2-en-1-yl diphosphate synthase (flavodoxin) (383 aa).

Residues Cys277, Cys280, Cys312, and Glu319 each coordinate [4Fe-4S] cluster.

The protein belongs to the IspG family. [4Fe-4S] cluster is required as a cofactor.

It carries out the reaction (2E)-4-hydroxy-3-methylbut-2-enyl diphosphate + oxidized [flavodoxin] + H2O + 2 H(+) = 2-C-methyl-D-erythritol 2,4-cyclic diphosphate + reduced [flavodoxin]. It participates in isoprenoid biosynthesis; isopentenyl diphosphate biosynthesis via DXP pathway; isopentenyl diphosphate from 1-deoxy-D-xylulose 5-phosphate: step 5/6. Converts 2C-methyl-D-erythritol 2,4-cyclodiphosphate (ME-2,4cPP) into 1-hydroxy-2-methyl-2-(E)-butenyl 4-diphosphate. This is 4-hydroxy-3-methylbut-2-en-1-yl diphosphate synthase (flavodoxin) from Caulobacter vibrioides (strain ATCC 19089 / CIP 103742 / CB 15) (Caulobacter crescentus).